The following is a 619-amino-acid chain: Type VI secretion system component TssF1 (619 aa).

In terms of assembly, interacts with TssA1.

Its function is as follows. Core component of the H1 type VI (H1-T6SS) secretion system that plays a role in the release of toxins targeting both eukaryotic and prokaryotic species. The protein is Type VI secretion system component TssF1 of Pseudomonas aeruginosa (strain ATCC 15692 / DSM 22644 / CIP 104116 / JCM 14847 / LMG 12228 / 1C / PRS 101 / PAO1).